The following is a 157-amino-acid chain: Phosphopantetheine adenylyltransferase (157 aa).

Residue Thr-8 participates in substrate binding. ATP-binding positions include 8–9 and His-16; that span reads TF. Substrate contacts are provided by Lys-40, Thr-72, and Arg-86. Residues 87–89, Glu-97, and 122–128 each bind ATP; these read GLR and YSFLSSS.

This sequence belongs to the bacterial CoaD family. As to quaternary structure, homohexamer. Requires Mg(2+) as cofactor.

Its subcellular location is the cytoplasm. It carries out the reaction (R)-4'-phosphopantetheine + ATP + H(+) = 3'-dephospho-CoA + diphosphate. It participates in cofactor biosynthesis; coenzyme A biosynthesis; CoA from (R)-pantothenate: step 4/5. Its function is as follows. Reversibly transfers an adenylyl group from ATP to 4'-phosphopantetheine, yielding dephospho-CoA (dPCoA) and pyrophosphate. In Prochlorococcus marinus (strain MIT 9215), this protein is Phosphopantetheine adenylyltransferase.